Consider the following 161-residue polypeptide: Small ribosomal subunit protein uS9 (161 aa).

The protein belongs to the universal ribosomal protein uS9 family.

The chain is Small ribosomal subunit protein uS9 from Bartonella tribocorum (strain CIP 105476 / IBS 506).